A 509-amino-acid polypeptide reads, in one-letter code: tRNA-2-methylthio-N(6)-dimethylallyladenosine synthase (509 aa).

Residues 1–15 (MNEQQRLASRQANSS) are compositionally biased toward polar residues. The tract at residues 1–25 (MNEQQRLASRQANSSTKKEEKDYSK) is disordered. Over residues 16–25 (TKKEEKDYSK) the composition is skewed to basic and acidic residues. The 119-residue stretch at 66 to 184 (RKFYIRTYGC…LPYILKDAMF (119 aa)) folds into the MTTase N-terminal domain. Residues Cys75, Cys111, Cys145, Cys221, Cys225, and Cys228 each coordinate [4Fe-4S] cluster. Residues 207–437 (RRGDIKAWVN…NTLVNEYGVN (231 aa)) form the Radical SAM core domain. A TRAM domain is found at 440–503 (KRYIGQIVEV…TWSLNGELVK (64 aa)).

This sequence belongs to the methylthiotransferase family. MiaB subfamily. Monomer. The cofactor is [4Fe-4S] cluster.

It localises to the cytoplasm. It carries out the reaction N(6)-dimethylallyladenosine(37) in tRNA + (sulfur carrier)-SH + AH2 + 2 S-adenosyl-L-methionine = 2-methylsulfanyl-N(6)-dimethylallyladenosine(37) in tRNA + (sulfur carrier)-H + 5'-deoxyadenosine + L-methionine + A + S-adenosyl-L-homocysteine + 2 H(+). In terms of biological role, catalyzes the methylthiolation of N6-(dimethylallyl)adenosine (i(6)A), leading to the formation of 2-methylthio-N6-(dimethylallyl)adenosine (ms(2)i(6)A) at position 37 in tRNAs that read codons beginning with uridine. The chain is tRNA-2-methylthio-N(6)-dimethylallyladenosine synthase from Bacillus mycoides (strain KBAB4) (Bacillus weihenstephanensis).